Reading from the N-terminus, the 652-residue chain is Spermatogenesis-associated protein 13 (652 aa).

Residues 1-24 (MTSASPEDQNAPVGCPKGARRRRP) are disordered. Ser78 carries the post-translational modification Phosphoserine. Positions 81–108 (IGLDRVGRRRQMRASNVSSDGGTEPSAL) are disordered. The tract at residues 98-150 (SSDGGTEPSALVDDNGSEEDFSYEDLCQASPRYLQPGGEQLAINELISDGNVV) is ABR (APC-binding region) domain. Residue Ser114 is modified to Phosphoserine. The SH3 domain occupies 147 to 206 (GNVVCAEALWDHVTMDDQELGFKAGDVIQVLEASNKDWWWGRSEDKEAWFPASFVRLRVN). The disordered stretch occupies residues 209 to 235 (ELSENSSSTPSEEQDEEASQSRHRHCE). The 185-residue stretch at 240–424 (MRTNVIREIM…KNVACLINER (185 aa)) folds into the DH domain. The PH domain occupies 455-561 (ELIHSGELTK…WLQACADERR (107 aa)). The segment at 561-652 (RRVQEDKEMG…TFNRLTPFRK (92 aa)) is C-terminal tail.

In terms of assembly, interacts (via ABR and SH3 domain) with APC. The binding of APC enhances its GEF activity by relieving it from an autoinhibitory conformation, in which the ABR and SH3 domains are associated with the C-terminal tail. Interacts (via C-terminal tail) with PPP1R9B (via C-terminus). Interacts with RAC1. As to expression, expressed at high levels in the placenta, spleen and kidney, at moderate levels in lung, small intestine, liver, brain and heart, and at low levels in skeletal muscle. Expression is aberrantly enhanced in most colorectal tumors.

It localises to the cytoplasm. The protein localises to the cell projection. Its subcellular location is the filopodium. The protein resides in the lamellipodium. It is found in the ruffle membrane. It localises to the podosome. With respect to regulation, both the ABR and the SH3 domains contribute to maintaining the protein in an inhibited conformation by associating with the C-terminal tail. Binding of these domains to the C-terminal tail inhibits the activity of the protein by blocking a region that is required for its GEF activity. Its function is as follows. Acts as a guanine nucleotide exchange factor (GEF) for RHOA, RAC1 and CDC42 GTPases. Regulates cell migration and adhesion assembly and disassembly through a RAC1, PI3K, RHOA and AKT1-dependent mechanism. Increases both RAC1 and CDC42 activity, but decreases the amount of active RHOA. Required for MMP9 up-regulation via the JNK signaling pathway in colorectal tumor cells. Involved in tumor angiogenesis and may play a role in intestinal adenoma formation and tumor progression. This chain is Spermatogenesis-associated protein 13, found in Homo sapiens (Human).